A 168-amino-acid chain; its full sequence is Nicotinamide-nucleotide adenylyltransferase (168 aa).

This sequence belongs to the archaeal NMN adenylyltransferase family.

The protein resides in the cytoplasm. It carries out the reaction beta-nicotinamide D-ribonucleotide + ATP + H(+) = diphosphate + NAD(+). It functions in the pathway cofactor biosynthesis; NAD(+) biosynthesis; NAD(+) from nicotinamide D-ribonucleotide: step 1/1. The protein is Nicotinamide-nucleotide adenylyltransferase of Methanosphaerula palustris (strain ATCC BAA-1556 / DSM 19958 / E1-9c).